A 124-amino-acid polypeptide reads, in one-letter code: Heat-labile enterotoxin B chain (124 aa).

The N-terminal stretch at 1–21 (MNKVKFYVLFTALLSSLCAHG) is a signal peptide. Cys30 and Cys107 are joined by a disulfide.

As to quaternary structure, heterohexamer of one A chain and of five B chains.

In terms of biological role, the biological activity of the toxin is produced by the A chain, which activates intracellular adenyl cyclase. This is Heat-labile enterotoxin B chain (eltB) from Escherichia coli.